An 883-amino-acid polypeptide reads, in one-letter code: Brevican core protein (883 aa).

The N-terminal stretch at 1–22 (MIPLLLSLLAALVLTQAPAALA) is a signal peptide. The region spanning 35-154 (FRVRIGATQL…SSDAVEVKVK (120 aa)) is the Ig-like V-type domain. 5 cysteine pairs are disulfide-bonded: Cys-56-Cys-136, Cys-178-Cys-249, Cys-202-Cys-223, Cys-276-Cys-351, and Cys-300-Cys-321. The N-linked (GlcNAc...) asparagine glycan is linked to Asn-129. 2 Link domains span residues 156–251 (VVFL…YCYA) and 256–353 (GELF…YCFR). Ser-224 carries the post-translational modification Phosphoserine. Asn-336 carries N-linked (GlcNAc...) asparagine glycosylation. The interval 402–592 (SIPISEDGGG…LETPSEEKSG (191 aa)) is disordered. Ser-413 bears the Phosphoserine mark. O-linked (Xyl...) (chondroitin sulfate) serine glycosylation is present at Ser-413. 2 stretches are compositionally biased toward acidic residues: residues 440–451 (SSEEEGVALEEE) and 459–468 (ALEEEKEQED). Polar residues predominate over residues 479 to 495 (PLPTGSETEHSLSQVSP). Residues 581 to 592 (RELETPSEEKSG) are compositionally biased toward basic and acidic residues. The 37-residue stretch at 622–658 (SSGDCIPSPCHNGGTCLEEKEGFRCLCLPGYGGDLCD) folds into the EGF-like domain. Disulfide bonds link Cys-626/Cys-637, Cys-631/Cys-646, Cys-648/Cys-657, Cys-664/Cys-675, Cys-692/Cys-784, Cys-760/Cys-776, Cys-791/Cys-834, and Cys-820/Cys-847. Positions 658–786 (DVGLHFCSPG…NYHLSYTCKM (129 aa)) constitute a C-type lectin domain. Residues 789–849 (VSCGPPPQLP…WEAPQISCVP (61 aa)) form the Sushi domain. A disordered region spans residues 854–883 (RALRSMDAPEGPRGQLSRHRKAPLTPPSSL).

It belongs to the aggrecan/versican proteoglycan family. As to quaternary structure, interacts with TNR. O-glycosylated; contains chondroitin sulfate. As to expression, expressed in the retina, specifically around the inner and outer segments of photoreceptors, retinal pigment epithelium, outer plexiform layer, and the ganglion cell layer (at protein level). Brain. Expressed in the brainstem and cerebellum in a perineuronal net pattern.

The protein resides in the secreted. Its subcellular location is the extracellular space. It is found in the extracellular matrix. Its function is as follows. May play a role in the terminally differentiating and the adult nervous system during postnatal development. Could stabilize interactions between hyaluronan (HA) and brain proteoglycans. The protein is Brevican core protein (Bcan) of Mus musculus (Mouse).